Consider the following 769-residue polypeptide: Endothelin-converting enzyme 1 (769 aa).

Over 1–67 the chain is Cytoplasmic; sequence MRTVWSPLAA…WAARTSVEKR (67 aa). Position 24 is a phosphothreonine (T24). A helical; Signal-anchor for type II membrane protein transmembrane segment spans residues 68–88; the sequence is LVVLVTLLAAGLVACLAALGI. The Extracellular segment spans residues 89-769; the sequence is QYQTRTPPVC…MNPHHKCEVW (681 aa). The Peptidase M13 domain occupies 97–769; it reads VCLTEACVSV…MNPHHKCEVW (673 aa). 5 cysteine pairs are disulfide-bonded: C98/C103, C121/C754, C129/C714, C184/C434, and C643/C766. Residues N165, N186, N209, N269, N315, N361, N382, and N538 are each glycosylated (N-linked (GlcNAc...) asparagine). H606 provides a ligand contact to Zn(2+). E607 is an active-site residue. H610 lines the Zn(2+) pocket. N-linked (GlcNAc...) asparagine glycans are attached at residues N631 and N650. Residue E666 participates in Zn(2+) binding. D670 acts as the Proton donor in catalysis.

Belongs to the peptidase M13 family. Homodimer; disulfide-linked. Interacts with PPP1R16B. Interacts with TSPAN8; this interaction recruits the endothelin converting enzyme ECE1 to tetraspanin-enriched microdomains and positively modulates its enzymatic activity. Zn(2+) is required as a cofactor.

The protein resides in the cell membrane. The catalysed reaction is Hydrolysis of the 21-Trp-|-Val-22 bond in big endothelin to form endothelin 1.. Its activity is regulated as follows. Inhibited by phosphoramidon. In terms of biological role, converts big endothelin-1 to endothelin-1. The chain is Endothelin-converting enzyme 1 (Ece1) from Mus musculus (Mouse).